The following is a 96-amino-acid chain: Large ribosomal subunit protein eL43 (96 aa).

Residues 41–62 (CPVCAFPKLKRAGTSIWVCDKC) form a C4-type zinc finger.

It belongs to the eukaryotic ribosomal protein eL43 family. Requires Zn(2+) as cofactor.

The polypeptide is Large ribosomal subunit protein eL43 (Methanococcus vannielii (strain ATCC 35089 / DSM 1224 / JCM 13029 / OCM 148 / SB)).